We begin with the raw amino-acid sequence, 317 residues long: MSFAPNASHSPVFLLLGFSRANISYTLLFFLFLAIYLTTILGNVTLVLLISWDSRLHSPMYYLLRGLSVIDMGLSTVTLPQLLAHLVSHYPTIPAARCLAQFFFFYAFGVTDTLVIAVMALDRYVAICDPLHYALVMNHQRCACLLALSWVVSILHTMLRVGLVLPLCWTGDAGGNVNLPHFFCDHRPLLRASCSDIHSNELAIFFEGGFLMLGPCALIVLSYVRIGAAILRLPSAAGRRRAVSTCGSHLTMVGFLYGTIICVYFQPPFQNSQYQDMVASVMYTAITPLANPFVYSLHNKDVKGALCRLLEWVKVDP.

The Extracellular segment spans residues 1–29 (MSFAPNASHSPVFLLLGFSRANISYTLLF). N-linked (GlcNAc...) asparagine glycans are attached at residues N6 and N22. Residues 30 to 50 (FLFLAIYLTTILGNVTLVLLI) form a helical membrane-spanning segment. Residues 51-66 (SWDSRLHSPMYYLLRG) are Cytoplasmic-facing. A helical transmembrane segment spans residues 67 to 87 (LSVIDMGLSTVTLPQLLAHLV). Topologically, residues 88–98 (SHYPTIPAARC) are extracellular. A disulfide bridge connects residues C98 and C184. Residues 99–119 (LAQFFFFYAFGVTDTLVIAVM) traverse the membrane as a helical segment. The Cytoplasmic portion of the chain corresponds to 120–144 (ALDRYVAICDPLHYALVMNHQRCAC). A helical transmembrane segment spans residues 145-165 (LLALSWVVSILHTMLRVGLVL). Residues 166–201 (PLCWTGDAGGNVNLPHFFCDHRPLLRASCSDIHSNE) are Extracellular-facing. The helical transmembrane segment at 202–222 (LAIFFEGGFLMLGPCALIVLS) threads the bilayer. Residues 223-248 (YVRIGAAILRLPSAAGRRRAVSTCGS) lie on the Cytoplasmic side of the membrane. The helical transmembrane segment at 249-269 (HLTMVGFLYGTIICVYFQPPF) threads the bilayer. The Extracellular segment spans residues 270 to 276 (QNSQYQD). Residues 277-297 (MVASVMYTAITPLANPFVYSL) traverse the membrane as a helical segment. At 298-317 (HNKDVKGALCRLLEWVKVDP) the chain is on the cytoplasmic side.

It belongs to the G-protein coupled receptor 1 family.

It localises to the cell membrane. Odorant receptor. This is Olfactory receptor 1B1 (OR1B1) from Homo sapiens (Human).